A 332-amino-acid polypeptide reads, in one-letter code: D-xylose-binding periplasmic protein (332 aa).

The signal sequence occupies residues 1–23 (MKIKSALLTLVGALTVFSSSAHS).

It belongs to the bacterial solute-binding protein 2 family.

It localises to the periplasm. In terms of biological role, involved in the high-affinity D-xylose membrane transport system. Binds with high affinity to xylose. This is D-xylose-binding periplasmic protein (xylF) from Haemophilus influenzae (strain ATCC 51907 / DSM 11121 / KW20 / Rd).